The following is a 402-amino-acid chain: uncharacterized protein (402 aa).

This is an uncharacterized protein from Saccharomyces cerevisiae (strain ATCC 204508 / S288c) (Baker's yeast).